The following is a 917-amino-acid chain: von Willebrand factor A domain-containing protein DDB_G0285975 (917 aa).

Residues 12–51 (DTTTTTTPTTPTTPTTPTTTPTTTTTPTTTPTTTTTSTTP) form a disordered region. Positions 13–51 (TTTTTTPTTPTTPTTPTTTPTTTTTPTTTPTTTTTSTTP) are enriched in low complexity. In terms of domain architecture, VIT spans 87–215 (RYNTGLKNIS…NVTIHLTIIS (129 aa)). The 169-residue stretch at 339–507 (EFIFLIDCSG…NFEEQVMKLV (169 aa)) folds into the VWFA domain. The region spanning 679–741 (LFSSENRNQT…INSIPQKSNI (63 aa)) is the t-SNARE coiled-coil homology domain. 2 stretches are compositionally biased toward low complexity: residues 751–760 (SPSEVSTSKS) and 774–818 (NNNN…NNNN). Positions 751 to 822 (SPSEVSTSKS…NNNNNNSDNS (72 aa)) are disordered.

This is von Willebrand factor A domain-containing protein DDB_G0285975 from Dictyostelium discoideum (Social amoeba).